Here is a 130-residue protein sequence, read N- to C-terminus: ATP synthase epsilon chain (130 aa).

Belongs to the ATPase epsilon chain family. In terms of assembly, F-type ATPases have 2 components, CF(1) - the catalytic core - and CF(0) - the membrane proton channel. CF(1) has five subunits: alpha(3), beta(3), gamma(1), delta(1), epsilon(1). CF(0) has three main subunits: a, b and c.

The protein localises to the cell membrane. Produces ATP from ADP in the presence of a proton gradient across the membrane. The chain is ATP synthase epsilon chain from Nocardia farcinica (strain IFM 10152).